Reading from the N-terminus, the 157-residue chain is Small ribosomal subunit protein uS13 (157 aa).

This sequence belongs to the universal ribosomal protein uS13 family. Part of the 30S ribosomal subunit. Forms a loose heterodimer with protein S19. Forms two bridges to the 50S subunit in the 70S ribosome.

In terms of biological role, located at the top of the head of the 30S subunit, it contacts several helices of the 16S rRNA. In the 70S ribosome it contacts the 23S rRNA (bridge B1a) and protein L5 of the 50S subunit (bridge B1b), connecting the 2 subunits; these bridges are implicated in subunit movement. The chain is Small ribosomal subunit protein uS13 from Thermofilum pendens (strain DSM 2475 / Hrk 5).